Here is a 129-residue protein sequence, read N- to C-terminus: MSWTEAEVRELKVGRYILIDDSPCRIVDITMSKPGKHGEAKGRIVAIGVFDNQKHSVVYPVKHKVKVPVITKKNAQVLSIANNEVQLMDSETFETFVIPVDPADLEKIKPGMEVPYWEAMGQRKIMLQN.

Residue lysine 36 is modified to Hypusine.

Belongs to the eIF-5A family.

Its subcellular location is the cytoplasm. In terms of biological role, functions by promoting the formation of the first peptide bond. The sequence is that of Translation initiation factor 5A from Picrophilus torridus (strain ATCC 700027 / DSM 9790 / JCM 10055 / NBRC 100828 / KAW 2/3).